The primary structure comprises 211 residues: ATP phosphoribosyltransferase (211 aa).

It belongs to the ATP phosphoribosyltransferase family. Short subfamily. As to quaternary structure, heteromultimer composed of HisG and HisZ subunits.

The protein localises to the cytoplasm. It catalyses the reaction 1-(5-phospho-beta-D-ribosyl)-ATP + diphosphate = 5-phospho-alpha-D-ribose 1-diphosphate + ATP. Its pathway is amino-acid biosynthesis; L-histidine biosynthesis; L-histidine from 5-phospho-alpha-D-ribose 1-diphosphate: step 1/9. Functionally, catalyzes the condensation of ATP and 5-phosphoribose 1-diphosphate to form N'-(5'-phosphoribosyl)-ATP (PR-ATP). Has a crucial role in the pathway because the rate of histidine biosynthesis seems to be controlled primarily by regulation of HisG enzymatic activity. In Pseudomonas entomophila (strain L48), this protein is ATP phosphoribosyltransferase.